We begin with the raw amino-acid sequence, 271 residues long: Formamidopyrimidine-DNA glycosylase (271 aa).

P2 acts as the Schiff-base intermediate with DNA in catalysis. E3 (proton donor) is an active-site residue. The Proton donor; for beta-elimination activity role is filled by K57. 3 residues coordinate DNA: H90, R109, and K151. The FPG-type zinc-finger motif lies at H236–T270. The Proton donor; for delta-elimination activity role is filled by R260.

This sequence belongs to the FPG family. Monomer. Zn(2+) serves as cofactor.

It carries out the reaction Hydrolysis of DNA containing ring-opened 7-methylguanine residues, releasing 2,6-diamino-4-hydroxy-5-(N-methyl)formamidopyrimidine.. The enzyme catalyses 2'-deoxyribonucleotide-(2'-deoxyribose 5'-phosphate)-2'-deoxyribonucleotide-DNA = a 3'-end 2'-deoxyribonucleotide-(2,3-dehydro-2,3-deoxyribose 5'-phosphate)-DNA + a 5'-end 5'-phospho-2'-deoxyribonucleoside-DNA + H(+). Involved in base excision repair of DNA damaged by oxidation or by mutagenic agents. Acts as a DNA glycosylase that recognizes and removes damaged bases. Has a preference for oxidized purines, such as 7,8-dihydro-8-oxoguanine (8-oxoG). Has AP (apurinic/apyrimidinic) lyase activity and introduces nicks in the DNA strand. Cleaves the DNA backbone by beta-delta elimination to generate a single-strand break at the site of the removed base with both 3'- and 5'-phosphates. The chain is Formamidopyrimidine-DNA glycosylase from Shewanella sp. (strain MR-7).